Reading from the N-terminus, the 473-residue chain is Aspartyl/glutamyl-tRNA(Asn/Gln) amidotransferase subunit B (473 aa).

This sequence belongs to the GatB/GatE family. GatB subfamily. Heterotrimer of A, B and C subunits.

It catalyses the reaction L-glutamyl-tRNA(Gln) + L-glutamine + ATP + H2O = L-glutaminyl-tRNA(Gln) + L-glutamate + ADP + phosphate + H(+). The catalysed reaction is L-aspartyl-tRNA(Asn) + L-glutamine + ATP + H2O = L-asparaginyl-tRNA(Asn) + L-glutamate + ADP + phosphate + 2 H(+). Allows the formation of correctly charged Asn-tRNA(Asn) or Gln-tRNA(Gln) through the transamidation of misacylated Asp-tRNA(Asn) or Glu-tRNA(Gln) in organisms which lack either or both of asparaginyl-tRNA or glutaminyl-tRNA synthetases. The reaction takes place in the presence of glutamine and ATP through an activated phospho-Asp-tRNA(Asn) or phospho-Glu-tRNA(Gln). In Wolbachia pipientis subsp. Culex pipiens (strain wPip), this protein is Aspartyl/glutamyl-tRNA(Asn/Gln) amidotransferase subunit B.